The primary structure comprises 242 residues: MLRSLTRRLLKLLFWLMLASALLVLALRWLPPPGTALMLERKIESWGSEQPLQLKRQWRPWNELPDHLKMAVIAAEDQKFAEHWGFDVGAIQAALAHNQSGGSLRGASTLSQQVAKNLFLWSGRSWPRKALEAWFTALIELFWPKERILEVYLNSVEWGDGIFGAEAAAQHHFGVGAPYLNRQQASQLAAVLPNPRRWSAGRPDAYVNRRAAWIRQQMTQLGGSHYLNQLKPRYPEWWPRWL.

A helical transmembrane segment spans residues 12-31; the sequence is LLFWLMLASALLVLALRWLP.

This sequence belongs to the glycosyltransferase 51 family.

It is found in the cell inner membrane. The enzyme catalyses [GlcNAc-(1-&gt;4)-Mur2Ac(oyl-L-Ala-gamma-D-Glu-L-Lys-D-Ala-D-Ala)](n)-di-trans,octa-cis-undecaprenyl diphosphate + beta-D-GlcNAc-(1-&gt;4)-Mur2Ac(oyl-L-Ala-gamma-D-Glu-L-Lys-D-Ala-D-Ala)-di-trans,octa-cis-undecaprenyl diphosphate = [GlcNAc-(1-&gt;4)-Mur2Ac(oyl-L-Ala-gamma-D-Glu-L-Lys-D-Ala-D-Ala)](n+1)-di-trans,octa-cis-undecaprenyl diphosphate + di-trans,octa-cis-undecaprenyl diphosphate + H(+). It participates in cell wall biogenesis; peptidoglycan biosynthesis. Peptidoglycan polymerase that catalyzes glycan chain elongation from lipid-linked precursors. This is Biosynthetic peptidoglycan transglycosylase from Ectopseudomonas mendocina (strain ymp) (Pseudomonas mendocina).